A 366-amino-acid chain; its full sequence is Ferredoxin--NADP reductase (366 aa).

7 residues coordinate FAD: Asp-51, Gln-59, Tyr-64, Val-104, Phe-139, Asp-308, and Thr-349.

It belongs to the ferredoxin--NADP reductase type 2 family. As to quaternary structure, homodimer. Requires FAD as cofactor.

It carries out the reaction 2 reduced [2Fe-2S]-[ferredoxin] + NADP(+) + H(+) = 2 oxidized [2Fe-2S]-[ferredoxin] + NADPH. The protein is Ferredoxin--NADP reductase of Polaromonas sp. (strain JS666 / ATCC BAA-500).